The chain runs to 343 residues: GTPase Obg (343 aa).

The region spanning 1–159 (MKFLDQAKIY…RWVWLRLKLI (159 aa)) is the Obg domain. The OBG-type G domain maps to 160–328 (ADAGLVGLPN…LLRQVMTYVA (169 aa)). GTP contacts are provided by residues 166–173 (GLPNAGKS), 191–195 (FTTLH), 213–216 (DIPG), 280–283 (NKCD), and 309–311 (SGV). Mg(2+) is bound by residues Ser173 and Thr193.

The protein belongs to the TRAFAC class OBG-HflX-like GTPase superfamily. OBG GTPase family. As to quaternary structure, monomer. Mg(2+) is required as a cofactor.

It localises to the cytoplasm. Its function is as follows. An essential GTPase which binds GTP, GDP and possibly (p)ppGpp with moderate affinity, with high nucleotide exchange rates and a fairly low GTP hydrolysis rate. Plays a role in control of the cell cycle, stress response, ribosome biogenesis and in those bacteria that undergo differentiation, in morphogenesis control. The chain is GTPase Obg from Granulibacter bethesdensis (strain ATCC BAA-1260 / CGDNIH1).